A 421-amino-acid polypeptide reads, in one-letter code: Gamma-glutamyl phosphate reductase (421 aa).

This sequence belongs to the gamma-glutamyl phosphate reductase family.

Its subcellular location is the cytoplasm. It catalyses the reaction L-glutamate 5-semialdehyde + phosphate + NADP(+) = L-glutamyl 5-phosphate + NADPH + H(+). It participates in amino-acid biosynthesis; L-proline biosynthesis; L-glutamate 5-semialdehyde from L-glutamate: step 2/2. Its function is as follows. Catalyzes the NADPH-dependent reduction of L-glutamate 5-phosphate into L-glutamate 5-semialdehyde and phosphate. The product spontaneously undergoes cyclization to form 1-pyrroline-5-carboxylate. In Stutzerimonas stutzeri (strain A1501) (Pseudomonas stutzeri), this protein is Gamma-glutamyl phosphate reductase.